The primary structure comprises 289 residues: GTPase Era (289 aa).

Residues 2 to 167 (KSGFISLIGR…LDEIYKYLPE (166 aa)) enclose the Era-type G domain. Residues 10–17 (GRTNAGKS) are G1. A GTP-binding site is contributed by 10–17 (GRTNAGKS). Residues 36–40 (NATRR) are G2. The segment at 57–60 (DTPG) is G3. GTP-binding positions include 57–61 (DTPGL) and 116–119 (TKID). Positions 116 to 119 (TKID) are G4. A G5 region spans residues 146–148 (LSV). A KH type-2 domain is found at 198–274 (VSDEVPYSTD…FLKINVKIDK (77 aa)).

It belongs to the TRAFAC class TrmE-Era-EngA-EngB-Septin-like GTPase superfamily. Era GTPase family. As to quaternary structure, monomer.

Its subcellular location is the cytoplasm. The protein localises to the cell inner membrane. Functionally, an essential GTPase that binds both GDP and GTP, with rapid nucleotide exchange. Plays a role in 16S rRNA processing and 30S ribosomal subunit biogenesis and possibly also in cell cycle regulation and energy metabolism. The protein is GTPase Era of Campylobacter fetus subsp. fetus (strain 82-40).